The chain runs to 1909 residues: DENN domain-containing protein 4C (1909 aa).

The region spanning 40–199 (KAPITDIAII…SVFLCYKKSV (160 aa)) is the MABP domain. Residues 191 to 364 (VFLCYKKSVP…NIPFPSPQRP (174 aa)) enclose the uDENN domain. Residues 385-521 (PLPLSGANFS…PCKNLLSTLK (137 aa)) enclose the cDENN domain. Residues 523 to 641 (LYPQLSSVHQ…CSFVSDKDTG (119 aa)) form the dDENN domain. A phosphoserine mark is found at S703, S737, and S741. One copy of the PPR repeat lies at 821 to 855 (VCYRVVMQLCGLWGHPVLAVRVLFEMKTARIKPNA). Phosphoserine occurs at positions 953, 965, 968, and 973. At T975 the chain carries Phosphothreonine. Phosphoserine occurs at positions 989, 996, 1003, 1046, 1061, 1099, 1126, 1184, 1225, 1244, 1252, and 1278. 2 disordered regions span residues 1243 to 1263 (KSPL…NRES) and 1277 to 1338 (SSLP…HGSL). The span at 1296–1316 (SSPAVSRSKTFTGRFKQQTPS) shows a compositional bias: polar residues. A phosphoserine mark is found at S1325, S1337, and S1346. The segment at 1419–1474 (SGLVPSELTQSNTSLGSSSSSGDVGKLHYPTGEVPFPRGMKGQDFEKSDHGSSQNT) is disordered. The span at 1426-1440 (LTQSNTSLGSSSSSG) shows a compositional bias: low complexity. The segment covering 1459–1468 (KGQDFEKSDH) has biased composition (basic and acidic residues). Phosphoserine is present on residues S1623, S1627, S1629, S1640, and S1799.

Post-translationally, phosphorylated in response to insulin.

Its subcellular location is the cytoplasmic vesicle membrane. The protein localises to the cell membrane. The protein resides in the cytoplasm. It is found in the cytosol. Guanine nucleotide exchange factor (GEF) activating RAB10. Promotes the exchange of GDP to GTP, converting inactive GDP-bound RAB10 into its active GTP-bound form. Thereby, stimulates SLC2A4/GLUT4 glucose transporter-enriched vesicles delivery to the plasma membrane in response to insulin. This is DENN domain-containing protein 4C (DENND4C) from Homo sapiens (Human).